The sequence spans 479 residues: Protein TRIGALACTOSYLDIACYLGLYCEROL 4, chloroplastic (479 aa).

The segment at 288-310 is a transmembrane helix; that stretch reads VFLSSPHVAVSGIIGSVMTAAFG.

In terms of assembly, homodimer. Forms dimeric beta-barrel. Interacts with TGD5.

It localises to the plastid. Its subcellular location is the chloroplast outer membrane. It is found in the endoplasmic reticulum. Its function is as follows. Involved in lipid transfer from the endoplasmic reticulum (ER) to plastids. Specifically binds phosphatidic acid (PtdOH). In Arabidopsis thaliana (Mouse-ear cress), this protein is Protein TRIGALACTOSYLDIACYLGLYCEROL 4, chloroplastic.